A 488-amino-acid chain; its full sequence is Katanin p60 ATPase-containing subunit A-like 1 (488 aa).

N-acetylmethionine is present on Met1. Positions 128–179 are disordered; that stretch reads GAGARGLVGRAHQISKSDKAASRDKDYRARGRDDKARKNMQDGASDGEIPKF. Residues 142 to 167 show a composition bias toward basic and acidic residues; the sequence is SKSDKAASRDKDYRARGRDDKARKNM. Ser172 carries the phosphoserine modification. Residue 246-253 coordinates ATP; it reads GPPGTGKT.

The protein belongs to the AAA ATPase family. Katanin p60 subunit A1 subfamily. A-like 1 sub-subfamily. As to quaternary structure, interacts with KATNB1 and KATNBL1.

It localises to the cytoplasm. It is found in the cytoskeleton. Its subcellular location is the spindle pole. The protein localises to the spindle. The catalysed reaction is n ATP + n H2O + a microtubule = n ADP + n phosphate + (n+1) alpha/beta tubulin heterodimers.. Its function is as follows. Regulates microtubule dynamics in Sertoli cells, a process that is essential for spermiogenesis and male fertility. Severs microtubules in an ATP-dependent manner, promoting rapid reorganization of cellular microtubule arrays. Has microtubule-severing activity in vitro. The protein is Katanin p60 ATPase-containing subunit A-like 1 (Katnal1) of Rattus norvegicus (Rat).